A 245-amino-acid chain; its full sequence is Leucyl/phenylalanyl-tRNA--protein transferase (245 aa).

The protein belongs to the L/F-transferase family.

The protein localises to the cytoplasm. It catalyses the reaction N-terminal L-lysyl-[protein] + L-leucyl-tRNA(Leu) = N-terminal L-leucyl-L-lysyl-[protein] + tRNA(Leu) + H(+). It carries out the reaction N-terminal L-arginyl-[protein] + L-leucyl-tRNA(Leu) = N-terminal L-leucyl-L-arginyl-[protein] + tRNA(Leu) + H(+). The enzyme catalyses L-phenylalanyl-tRNA(Phe) + an N-terminal L-alpha-aminoacyl-[protein] = an N-terminal L-phenylalanyl-L-alpha-aminoacyl-[protein] + tRNA(Phe). Functions in the N-end rule pathway of protein degradation where it conjugates Leu, Phe and, less efficiently, Met from aminoacyl-tRNAs to the N-termini of proteins containing an N-terminal arginine or lysine. The protein is Leucyl/phenylalanyl-tRNA--protein transferase of Paraburkholderia xenovorans (strain LB400).